An 859-amino-acid polypeptide reads, in one-letter code: Volume-regulated anion channel subunit LRRC8D (859 aa).

Residues Met-1–Pro-22 are Cytoplasmic-facing. A helical transmembrane segment spans residues Trp-23–Thr-48. At Lys-49–Lys-164 the chain is on the extracellular side. An intrachain disulfide couples Cys-54 to Cys-355. The disordered stretch occupies residues Ile-110–Arg-138. Over residues Glu-127–Arg-138 the composition is skewed to basic and acidic residues. A helical transmembrane segment spans residues Tyr-165 to Phe-183. Over Trp-184–Tyr-309 the chain is Cytoplasmic. Positions Ser-222–Thr-252 are disordered. Residues Arg-228 to Thr-252 are compositionally biased toward polar residues. Phosphoserine is present on residues Ser-242, Ser-243, and Ser-247. Residues Val-310–Val-331 form a helical membrane-spanning segment. At Asn-332–Tyr-361 the chain is on the extracellular side. The helical transmembrane segment at Met-362 to Trp-387 threads the bilayer. The Cytoplasmic portion of the chain corresponds to Leu-388–Ile-859. LRR repeat units follow at residues Asn-515–Phe-535, His-539–Leu-560, Asn-562–Glu-583, His-590–Val-610, His-613–Lys-633, Asn-637–Leu-658, Asn-660–Gln-681, Arg-685–Val-706, Asn-708–Leu-729, Lys-731–Leu-752, Asn-754–Cys-775, Lys-777–Leu-798, and Gln-800–Cys-821.

This sequence belongs to the LRRC8 family. In terms of assembly, heterohexamer; oligomerizes with other LRRC8 proteins (LRRC8A, LRRC8B, LRRC8C and/or LRRC8E) to form a heterohexamer. In vivo, the subunit composition may depend primarily on expression levels, and heterooligomeric channels containing various proportions of the different LRRC8 proteins may coexist. In terms of tissue distribution, expressed in pancreatic beta cells. Also expressed in glucagon-secreting pancreatic alpha cells.

The protein localises to the cell membrane. It localises to the endoplasmic reticulum membrane. It catalyses the reaction chloride(in) = chloride(out). It carries out the reaction iodide(out) = iodide(in). The enzyme catalyses taurine(out) = taurine(in). Functionally, non-essential component of the volume-regulated anion channel (VRAC, also named VSOAC channel), an anion channel required to maintain a constant cell volume in response to extracellular or intracellular osmotic changes. The VRAC channel conducts iodide better than chloride and can also conduct organic osmolytes like taurine. Plays a redundant role in the efflux of amino acids, such as aspartate, in response to osmotic stress family member (LRRC8B, LRRC8C, LRRC8D or LRRC8E); channel characteristics depend on the precise subunit composition. Also acts as a regulator of glucose-sensing in pancreatic beta cells: VRAC currents, generated in response to hypotonicity- or glucose-induced beta cell swelling, depolarize cells, thereby causing electrical excitation, leading to increase glucose sensitivity and insulin secretion. VRAC channels containing LRRC8D inhibit transport of immunoreactive cyclic dinucleotide GMP-AMP (2'-3'-cGAMP), an immune messenger produced in response to DNA virus in the cytosol. The protein is Volume-regulated anion channel subunit LRRC8D of Mus musculus (Mouse).